A 302-amino-acid polypeptide reads, in one-letter code: Sulfate adenylyltransferase subunit 2 (302 aa).

It belongs to the PAPS reductase family. CysD subfamily. As to quaternary structure, heterodimer composed of CysD, the smaller subunit, and CysN.

It catalyses the reaction sulfate + ATP + H(+) = adenosine 5'-phosphosulfate + diphosphate. The protein operates within sulfur metabolism; hydrogen sulfide biosynthesis; sulfite from sulfate: step 1/3. Its function is as follows. With CysN forms the ATP sulfurylase (ATPS) that catalyzes the adenylation of sulfate producing adenosine 5'-phosphosulfate (APS) and diphosphate, the first enzymatic step in sulfur assimilation pathway. APS synthesis involves the formation of a high-energy phosphoric-sulfuric acid anhydride bond driven by GTP hydrolysis by CysN coupled to ATP hydrolysis by CysD. This Zymomonas mobilis subsp. mobilis (strain ATCC 31821 / ZM4 / CP4) protein is Sulfate adenylyltransferase subunit 2.